The primary structure comprises 575 residues: G2/mitotic-specific cyclin-B3 (575 aa).

The short motif at 75–83 (RSALGNLTN) is the D-box element. Ser215 carries the phosphoserine modification.

It belongs to the cyclin family. Cyclin AB subfamily. Interacts with Cdk1 kinase. Post-translationally, ubiquitinated. Ubiquitination leads to its degradation in early anaphase. In terms of tissue distribution, in embryo, it is expressed in all mitotically proliferating cells, with a high level in neuroblasts. Not expressed in old embryos and thereafter. Not expressed in endoreplicating tissues.

It is found in the nucleus. Cyclins are positive regulatory subunits of the cyclin-dependent kinases (CDKs), and thereby play an essential role in the control of the cell cycle, notably via their destruction during cell division. Probably functions redundantly with other cyclins in regulation of cell cycle. Its presence may be required to delay a deadline for completing cytokinesis that is ordinary imposed by nuclear envelope reformation. Degradation of CycB and CycB3 promote cytokinesis furrow initiation and ingression. Required with CycB for female fertility. The protein is G2/mitotic-specific cyclin-B3 (CycB3) of Drosophila melanogaster (Fruit fly).